Reading from the N-terminus, the 219-residue chain is Ribose-5-phosphate isomerase A (219 aa).

Substrate is bound by residues 28 to 31 (SGST), 81 to 84 (DGAD), and 94 to 97 (KGGG). Glu-103 (proton acceptor) is an active-site residue. Lys-121 contacts substrate.

It belongs to the ribose 5-phosphate isomerase family. In terms of assembly, homodimer.

It carries out the reaction aldehydo-D-ribose 5-phosphate = D-ribulose 5-phosphate. It functions in the pathway carbohydrate degradation; pentose phosphate pathway; D-ribose 5-phosphate from D-ribulose 5-phosphate (non-oxidative stage): step 1/1. Functionally, catalyzes the reversible conversion of ribose-5-phosphate to ribulose 5-phosphate. This is Ribose-5-phosphate isomerase A from Haemophilus influenzae (strain PittEE).